The following is a 152-amino-acid chain: SsrA-binding protein (152 aa).

Belongs to the SmpB family.

It is found in the cytoplasm. In terms of biological role, required for rescue of stalled ribosomes mediated by trans-translation. Binds to transfer-messenger RNA (tmRNA), required for stable association of tmRNA with ribosomes. tmRNA and SmpB together mimic tRNA shape, replacing the anticodon stem-loop with SmpB. tmRNA is encoded by the ssrA gene; the 2 termini fold to resemble tRNA(Ala) and it encodes a 'tag peptide', a short internal open reading frame. During trans-translation Ala-aminoacylated tmRNA acts like a tRNA, entering the A-site of stalled ribosomes, displacing the stalled mRNA. The ribosome then switches to translate the ORF on the tmRNA; the nascent peptide is terminated with the 'tag peptide' encoded by the tmRNA and targeted for degradation. The ribosome is freed to recommence translation, which seems to be the essential function of trans-translation. In Gloeobacter violaceus (strain ATCC 29082 / PCC 7421), this protein is SsrA-binding protein.